A 331-amino-acid chain; its full sequence is Glutaminase-asparaginase (331 aa).

In terms of domain architecture, Asparaginase/glutaminase spans 2–331; it reads NNVVIVATGG…KEIQNMFWNY (330 aa). The active-site Acyl-ester intermediate is T12. Residues S59 and 92–93 contribute to the substrate site; that span reads TD.

Belongs to the asparaginase 1 family. In terms of assembly, homotetramer.

The protein resides in the periplasm. It carries out the reaction L-glutamine + H2O = L-glutamate + NH4(+). The catalysed reaction is L-asparagine + H2O = L-aspartate + NH4(+). The sequence is that of Glutaminase-asparaginase (ansB) from Acinetobacter glutaminasificans.